The following is a 660-amino-acid chain: Bifunctional polymyxin resistance protein ArnA (660 aa).

The interval 1 to 304 is formyltransferase ArnAFT; sequence MKAIVFAYHD…DMSMVTDVRV (304 aa). Histidine 104 serves as the catalytic Proton donor; for formyltransferase activity. (6R)-10-formyltetrahydrofolate contacts are provided by residues arginine 114 and 136–140; that span reads VLKPD. Positions 314–660 are dehydrogenase ArnADH; that stretch reads HRKRVLILGV…RGAVEELGKN (347 aa). Residues aspartate 347 and 368–369 each bind NAD(+); that span reads DI. Residues alanine 393, tyrosine 398, and 432–433 each bind UDP-alpha-D-glucuronate; that span reads TS. Catalysis depends on glutamate 434, which acts as the Proton acceptor; for decarboxylase activity. UDP-alpha-D-glucuronate contacts are provided by residues arginine 460, asparagine 492, 526-535, and tyrosine 613; that span reads KLVDGGEQKR. The active-site Proton donor; for decarboxylase activity is the arginine 619.

The protein in the N-terminal section; belongs to the Fmt family. UDP-L-Ara4N formyltransferase subfamily. It in the C-terminal section; belongs to the NAD(P)-dependent epimerase/dehydratase family. UDP-glucuronic acid decarboxylase subfamily. Homohexamer, formed by a dimer of trimers.

The catalysed reaction is UDP-alpha-D-glucuronate + NAD(+) = UDP-beta-L-threo-pentopyranos-4-ulose + CO2 + NADH. The enzyme catalyses UDP-4-amino-4-deoxy-beta-L-arabinose + (6R)-10-formyltetrahydrofolate = UDP-4-deoxy-4-formamido-beta-L-arabinose + (6S)-5,6,7,8-tetrahydrofolate + H(+). Its pathway is nucleotide-sugar biosynthesis; UDP-4-deoxy-4-formamido-beta-L-arabinose biosynthesis; UDP-4-deoxy-4-formamido-beta-L-arabinose from UDP-alpha-D-glucuronate: step 1/3. It functions in the pathway nucleotide-sugar biosynthesis; UDP-4-deoxy-4-formamido-beta-L-arabinose biosynthesis; UDP-4-deoxy-4-formamido-beta-L-arabinose from UDP-alpha-D-glucuronate: step 3/3. The protein operates within bacterial outer membrane biogenesis; lipopolysaccharide biosynthesis. Functionally, bifunctional enzyme that catalyzes the oxidative decarboxylation of UDP-glucuronic acid (UDP-GlcUA) to UDP-4-keto-arabinose (UDP-Ara4O) and the addition of a formyl group to UDP-4-amino-4-deoxy-L-arabinose (UDP-L-Ara4N) to form UDP-L-4-formamido-arabinose (UDP-L-Ara4FN). The modified arabinose is attached to lipid A and is required for resistance to polymyxin and cationic antimicrobial peptides. In Photorhabdus laumondii subsp. laumondii (strain DSM 15139 / CIP 105565 / TT01) (Photorhabdus luminescens subsp. laumondii), this protein is Bifunctional polymyxin resistance protein ArnA.